A 1465-amino-acid chain; its full sequence is DNA polymerase III PolC-type (1465 aa).

Positions 427–583 (YVVFDVETTG…YDAEATGRLL (157 aa)) constitute an Exonuclease domain.

This sequence belongs to the DNA polymerase type-C family. PolC subfamily.

The protein localises to the cytoplasm. It carries out the reaction DNA(n) + a 2'-deoxyribonucleoside 5'-triphosphate = DNA(n+1) + diphosphate. Functionally, required for replicative DNA synthesis. This DNA polymerase also exhibits 3' to 5' exonuclease activity. The protein is DNA polymerase III PolC-type of Streptococcus pyogenes serotype M18 (strain MGAS8232).